Consider the following 463-residue polypeptide: Lactadherin (463 aa).

The signal sequence occupies residues 1 to 22 (MQVSRVLAALCGMLLCASGLFA). EGF-like domains lie at 24 to 61 (SGDFCDSSLCLNGGTCLTGQDNDIYCLCPEGFTGLVCN) and 64 to 108 (ERGP…IHCE). 3 disulfides stabilise this stretch: C28/C39, C33/C49, and C51/C60. A glycan (N-linked (GlcNAc...) asparagine) is linked at N61. Cystine bridges form between C68–C79, C73–C96, C98–C107, C148–C303, C290–C294, and C308–C463. The Cell attachment site motif lies at 87–89 (RGD). F5/8 type C domains lie at 148–303 (CSTQ…LLGC) and 308–463 (CSEP…LLGC). N266 carries an N-linked (GlcNAc...) asparagine glycan. N316 and N426 each carry an N-linked (GlcNAc...) asparagine glycan.

N-glycosylated. Isoform 1 also exists in both an O-glycosylated and a non-O-glycosylated form. In terms of tissue distribution, mammary epithelial cell surfaces and spermatozoan. Isoform 2 is present in brain, heart, kidney and spleen and at low levels in lung, liver, small intestine and testis.

It is found in the membrane. The protein resides in the secreted. The protein localises to the cytoplasmic vesicle. Its subcellular location is the secretory vesicle. It localises to the acrosome membrane. Functionally, contributes to phagocytic removal of apoptotic cells in many tissues. Specific ligand for the alpha-v/beta-3 and alpha-v/beta-5 receptors. Also binds to phosphatidylserine-enriched cell surfaces in a receptor-independent manner. Zona pellucida-binding protein which may play a role in gamete interaction. Plays an important role in the maintenance of intestinal epithelial homeostasis and the promotion of mucosal healing. Promotes VEGF-dependent neovascularization. This is Lactadherin (Mfge8) from Mus musculus (Mouse).